Here is a 334-residue protein sequence, read N- to C-terminus: N-acetyl-gamma-glutamyl-phosphate reductase (334 aa).

Cysteine 154 is a catalytic residue.

The protein belongs to the NAGSA dehydrogenase family. Type 1 subfamily.

It localises to the cytoplasm. It carries out the reaction N-acetyl-L-glutamate 5-semialdehyde + phosphate + NADP(+) = N-acetyl-L-glutamyl 5-phosphate + NADPH + H(+). Its pathway is amino-acid biosynthesis; L-arginine biosynthesis; N(2)-acetyl-L-ornithine from L-glutamate: step 3/4. In terms of biological role, catalyzes the NADPH-dependent reduction of N-acetyl-5-glutamyl phosphate to yield N-acetyl-L-glutamate 5-semialdehyde. The chain is N-acetyl-gamma-glutamyl-phosphate reductase from Buchnera aphidicola subsp. Acyrthosiphon pisum (strain Tuc7).